Here is a 258-residue protein sequence, read N- to C-terminus: Type III pantothenate kinase (258 aa).

12-19 (DIGNTSIA) serves as a coordination point for ATP. Substrate is bound by residues Y94 and 109 to 112 (GSDV). Catalysis depends on D111, which acts as the Proton acceptor. D132 provides a ligand contact to K(+). T135 provides a ligand contact to ATP. T187 contributes to the substrate binding site.

This sequence belongs to the type III pantothenate kinase family. In terms of assembly, homodimer. Requires NH4(+) as cofactor. The cofactor is K(+).

The protein localises to the cytoplasm. It carries out the reaction (R)-pantothenate + ATP = (R)-4'-phosphopantothenate + ADP + H(+). It functions in the pathway cofactor biosynthesis; coenzyme A biosynthesis; CoA from (R)-pantothenate: step 1/5. Its function is as follows. Catalyzes the phosphorylation of pantothenate (Pan), the first step in CoA biosynthesis. The protein is Type III pantothenate kinase of Borreliella afzelii (strain PKo) (Borrelia afzelii).